The sequence spans 488 residues: MALTVNTNIASLNTQRNLNASSNDLNTSLQRLTTGYRINSAKDDAAGLQISNRLSNQISGLNVATRNANDGISLAQTAEGALQQSTNILQRIRDLALQSANGSNSDADRAALQKEVAAQQAELTRISDTTTFGGRKLLDGSFGTTSFQVGSNAYETIDISLQNASASAIGSYQVGSNGAGTVASVAGTATASGIASGTVNLVGGGQVKNIAIAAGDSAKAIAEKMDGAIPNLSARARTVFTADVSGVTGGSLNFDVTVGSNTVSLAGVTSTQDLADQLNSNSSKLGITASINDKGVLTITSATGENVKFGAQTGTATAGQVAVKVQGSDGKFEAAAKNVVAAGTAATTTIVTGYVQLNSPTAYSVSGTGTQASQVFGNASAAQKSSVASVDISTADGAQNAIAVVDNALAAIDAQRADLGAVQNRFKNTIDNLTNISENATNARSRIKDTDFAAETAALSKNQVLQQAGTAILAQANQLPQAVLSLLR.

Belongs to the bacterial flagellin family. Phosphorylated on tyrosine residue(s).

It localises to the secreted. Its subcellular location is the bacterial flagellum. Flagellin is the subunit protein which polymerizes to form the filaments of bacterial flagella. The chain is B-type flagellin (fliC) from Pseudomonas aeruginosa (strain ATCC 15692 / DSM 22644 / CIP 104116 / JCM 14847 / LMG 12228 / 1C / PRS 101 / PAO1).